Reading from the N-terminus, the 579-residue chain is ATP-dependent RNA helicase SUV3, mitochondrial (579 aa).

The transit peptide at M1–D59 directs the protein to the mitochondrion. One can recognise a Helicase ATP-binding domain in the interval N72–V213. ATP is bound at residue G85 to T92. A Helicase C-terminal domain is found at V214–S388. Residue N309 is glycosylated (N-linked (GlcNAc...) asparagine).

The protein belongs to the helicase family. In terms of assembly, homodimer; in free form. Component of the mitochondrial degradosome (mtEXO) complex which is a heteropentamer containing 2 copies of SUPV3L1 and 3 copies of PNPT1. Mg(2+) serves as cofactor. Mn(2+) is required as a cofactor.

It is found in the nucleus. Its subcellular location is the mitochondrion matrix. The protein resides in the mitochondrion nucleoid. The enzyme catalyses ATP + H2O = ADP + phosphate + H(+). In terms of biological role, major helicase player in mitochondrial RNA metabolism. Component of the mitochondrial degradosome (mtEXO) complex, that degrades 3' overhang double-stranded RNA with a 3'-to-5' directionality in an ATP-dependent manner. ATPase and ATP-dependent multisubstrate helicase, able to unwind double-stranded (ds) DNA and RNA, and RNA/DNA heteroduplexes in the 5'-to-3' direction. Plays a role in the RNA surveillance system in mitochondria; regulates the stability of mature mRNAs, the removal of aberrantly formed mRNAs and the rapid degradation of non coding processing intermediates. Confers salinity and drought stress tolerances by maintaining both photosynthesis and antioxidant machinery, probably via an increase in plant hormones levels such as gibberellic acid (GA(3)), the cytokinin zeatin (Z) and indole-3-acetic acid (IAA). The polypeptide is ATP-dependent RNA helicase SUV3, mitochondrial (Oryza sativa subsp. japonica (Rice)).